The sequence spans 287 residues: Phosphatidylserine decarboxylase proenzyme (287 aa).

Active-site charge relay system; for autoendoproteolytic cleavage activity residues include aspartate 90, histidine 147, and serine 252. Catalysis depends on serine 252, which acts as the Schiff-base intermediate with substrate; via pyruvic acid; for decarboxylase activity. At serine 252 the chain carries Pyruvic acid (Ser); by autocatalysis.

This sequence belongs to the phosphatidylserine decarboxylase family. PSD-B subfamily. Prokaryotic type I sub-subfamily. As to quaternary structure, heterodimer of a large membrane-associated beta subunit and a small pyruvoyl-containing alpha subunit. Pyruvate serves as cofactor. Post-translationally, is synthesized initially as an inactive proenzyme. Formation of the active enzyme involves a self-maturation process in which the active site pyruvoyl group is generated from an internal serine residue via an autocatalytic post-translational modification. Two non-identical subunits are generated from the proenzyme in this reaction, and the pyruvate is formed at the N-terminus of the alpha chain, which is derived from the carboxyl end of the proenzyme. The autoendoproteolytic cleavage occurs by a canonical serine protease mechanism, in which the side chain hydroxyl group of the serine supplies its oxygen atom to form the C-terminus of the beta chain, while the remainder of the serine residue undergoes an oxidative deamination to produce ammonia and the pyruvoyl prosthetic group on the alpha chain. During this reaction, the Ser that is part of the protease active site of the proenzyme becomes the pyruvoyl prosthetic group, which constitutes an essential element of the active site of the mature decarboxylase.

The protein localises to the cell membrane. It carries out the reaction a 1,2-diacyl-sn-glycero-3-phospho-L-serine + H(+) = a 1,2-diacyl-sn-glycero-3-phosphoethanolamine + CO2. The protein operates within phospholipid metabolism; phosphatidylethanolamine biosynthesis; phosphatidylethanolamine from CDP-diacylglycerol: step 2/2. Functionally, catalyzes the formation of phosphatidylethanolamine (PtdEtn) from phosphatidylserine (PtdSer). In Pseudomonas putida (strain W619), this protein is Phosphatidylserine decarboxylase proenzyme.